We begin with the raw amino-acid sequence, 616 residues long: Replication protein A 70 kDa DNA-binding subunit (616 aa).

Methionine 1 carries the N-acetylmethionine modification. Residues lysine 22 and lysine 88 each participate in a glycyl lysine isopeptide (Lys-Gly) (interchain with G-Cter in ubiquitin) cross-link. Residues 121-155 (GLGQPQVAPPAPAASPAASSRPQPQNGTSGAGSTV) are disordered. The segment covering 134–145 (ASPAASSRPQPQ) has biased composition (low complexity). The span at 146-155 (NGTSGAGSTV) shows a compositional bias: polar residues. Residues lysine 163 and lysine 167 each carry the N6-acetyllysine; alternate modification. Residues lysine 163 and lysine 167 each participate in a glycyl lysine isopeptide (Lys-Gly) (interchain with G-Cter in ubiquitin); alternate cross-link. Threonine 180 carries the phosphothreonine modification. A Glycyl lysine isopeptide (Lys-Gly) (interchain with G-Cter in ubiquitin) cross-link involves residue lysine 183. Phosphothreonine is present on threonine 191. Residues 197-281 (WTICARVTNK…VKNDYEMTFN (85 aa)) constitute a DNA-binding region (OB). Glycyl lysine isopeptide (Lys-Gly) (interchain with G-Cter in ubiquitin) cross-links involve residues lysine 220 and lysine 244. N6-acetyllysine; alternate is present on lysine 259. Lysine 259 participates in a covalent cross-link: Glycyl lysine isopeptide (Lys-Gly) (interchain with G-Cter in ubiquitin); alternate. Glycyl lysine isopeptide (Lys-Gly) (interchain with G-Cter in ubiquitin) cross-links involve residues lysine 267 and lysine 331. At serine 384 the chain carries Phosphoserine. Glycyl lysine isopeptide (Lys-Gly) (interchain with G-Cter in ubiquitin) cross-links involve residues lysine 410 and lysine 431. Residue lysine 449 forms a Glycyl lysine isopeptide (Lys-Gly) (interchain with G-Cter in SUMO) linkage. Lysine 458 is covalently cross-linked (Glycyl lysine isopeptide (Lys-Gly) (interchain with G-Cter in ubiquitin)). The C4-type zinc-finger motif lies at 481-503 (CPTQDCNKKVIDQQNGLYRCEKC). Lysine 553 participates in a covalent cross-link: Glycyl lysine isopeptide (Lys-Gly) (interchain with G-Cter in ubiquitin). Lysine 577 participates in a covalent cross-link: Glycyl lysine isopeptide (Lys-Gly) (interchain with G-Cter in SUMO).

This sequence belongs to the replication factor A protein 1 family. In terms of assembly, component of the canonical replication protein A complex (RPA), a heterotrimer composed of RPA1, RPA2 and RPA3. The DNA-binding activity may reside exclusively on the RPA1 subunit. Interacts with PRPF19; the PRP19-CDC5L complex is recruited to the sites of DNA repair where it ubiquitinates the replication protein A complex (RPA). Interacts with RIPK1. Interacts with the polymerase alpha subunit POLA1/p180; this interaction stabilizes the replicative complex and reduces the misincorporation rate of DNA polymerase alpha by acting as a fidelity clamp. Interacts with RAD51 and SENP6 to regulate DNA repair. Interacts with HELB; this interaction promotes HELB recruitment to chromatin following DNA damage. Interacts with PRIMPOL; leading to recruit PRIMPOL on chromatin and stimulate its DNA primase activity. Interacts with XPA; the interaction is direct and associates XPA with the RPA complex. Interacts with ETAA1; the interaction is direct and promotes ETAA1 recruitment at stalled replication forks. Interacts with RPA1; this interaction associates HROB with the RPA complex. Interacts (when poly-ADP-ribosylated) with HTATSF1. DNA damage-induced 'Lys-63'-linked polyubiquitination by PRPF19 mediates ATRIP recruitment to the RPA complex at sites of DNA damage and activation of ATR. Ubiquitinated by RFWD3 at stalled replication forks in response to DNA damage: ubiquitination by RFWD3 does not lead to degradation by the proteasome and promotes removal of the RPA complex from stalled replication forks, promoting homologous recombination. In terms of processing, sumoylated on lysine residues Lys-449 and Lys-577, with Lys-449 being the major site. Sumoylation promotes recruitment of RAD51 to the DNA damage foci to initiate DNA repair through homologous recombination. Desumoylated by SENP6. Post-translationally, poly-ADP-ribosylated by PARP1; promoting recruitment of HTATSF1.

The protein localises to the nucleus. Its subcellular location is the PML body. Its function is as follows. As part of the heterotrimeric replication protein A complex (RPA/RP-A), binds and stabilizes single-stranded DNA intermediates, that form during DNA replication or upon DNA stress. It prevents their reannealing and in parallel, recruits and activates different proteins and complexes involved in DNA metabolism. Thereby, it plays an essential role both in DNA replication and the cellular response to DNA damage. In the cellular response to DNA damage, the RPA complex controls DNA repair and DNA damage checkpoint activation. Through recruitment of ATRIP activates the ATR kinase a master regulator of the DNA damage response. It is required for the recruitment of the DNA double-strand break repair factors RAD51 and RAD52 to chromatin in response to DNA damage. Also recruits to sites of DNA damage proteins like XPA and XPG that are involved in nucleotide excision repair and is required for this mechanism of DNA repair. Also plays a role in base excision repair (BER) probably through interaction with UNG. Also recruits SMARCAL1/HARP, which is involved in replication fork restart, to sites of DNA damage. May also play a role in telomere maintenance. In Pongo abelii (Sumatran orangutan), this protein is Replication protein A 70 kDa DNA-binding subunit (RPA1).